The sequence spans 251 residues: Pyridoxine 5'-phosphate synthase (251 aa).

Asparagine 8 and arginine 19 together coordinate 3-amino-2-oxopropyl phosphate. Histidine 44 (proton acceptor) is an active-site residue. Positions 46 and 51 each coordinate 1-deoxy-D-xylulose 5-phosphate. The Proton acceptor role is filled by glutamate 76. Threonine 106 lines the 1-deoxy-D-xylulose 5-phosphate pocket. The active-site Proton donor is histidine 200. Residues aspartate 201 and 223–224 contribute to the 3-amino-2-oxopropyl phosphate site; that span reads GH.

Belongs to the PNP synthase family. Homooctamer; tetramer of dimers.

The protein localises to the cytoplasm. It carries out the reaction 3-amino-2-oxopropyl phosphate + 1-deoxy-D-xylulose 5-phosphate = pyridoxine 5'-phosphate + phosphate + 2 H2O + H(+). The protein operates within cofactor biosynthesis; pyridoxine 5'-phosphate biosynthesis; pyridoxine 5'-phosphate from D-erythrose 4-phosphate: step 5/5. Its function is as follows. Catalyzes the complicated ring closure reaction between the two acyclic compounds 1-deoxy-D-xylulose-5-phosphate (DXP) and 3-amino-2-oxopropyl phosphate (1-amino-acetone-3-phosphate or AAP) to form pyridoxine 5'-phosphate (PNP) and inorganic phosphate. The protein is Pyridoxine 5'-phosphate synthase of Agrobacterium fabrum (strain C58 / ATCC 33970) (Agrobacterium tumefaciens (strain C58)).